The following is a 362-amino-acid chain: Type-1 angiotensin II receptor A (362 aa).

The Extracellular portion of the chain corresponds to 1–26 (MSNASTVETSDVERIAVNCSKSGMHN). N-linked (GlcNAc...) asparagine glycosylation is found at Asn-3 and Asn-18. 2 disulfides stabilise this stretch: Cys-19-Cys-273 and Cys-102-Cys-181. A helical transmembrane segment spans residues 27–56 (YIFIAIPIIYSTIFVVGVFGNSMVVIVIYS). At 57–62 (YMKMKT) the chain is on the cytoplasmic side. The helical transmembrane segment at 63 to 90 (VASIFLMNLALSDLCFVITLPLWAAYTA) threads the bilayer. The Extracellular segment spans residues 91 to 99 (MHYHWPFGN). The chain crosses the membrane as a helical span at residues 100 to 126 (FLCKVASTAITLNLYTTVFLLTCLSID). Topologically, residues 127 to 142 (RYSAIVHPMKSRIWRT) are cytoplasmic. A helical membrane pass occupies residues 143 to 166 (AMVARLTCVGIWLVAFLASMPSII). Topologically, residues 167–191 (YRQIYLFHDTNQTVCAIVYDSGHIY) are extracellular. An angiotensin II-binding site is contributed by Arg-168. Asn-177 is a glycosylation site (N-linked (GlcNAc...) asparagine). Angiotensin II is bound by residues Tyr-185 and Lys-200. A helical transmembrane segment spans residues 192–217 (FMVGMSLAKNIVGFLIPFLIILTSYT). Over 218–238 (LIGKTLKEVYRAQRARNDDIF) the chain is Cytoplasmic. Residues 239–267 (KMIVAVVLLFFFCWIPYQVFTFLDVLIQM) traverse the membrane as a helical segment. Over 268-277 (DVIQNCKMYD) the chain is Extracellular. A helical membrane pass occupies residues 278–303 (IVDTGMPITICIAYFNSCLNPFLYGF). The Cytoplasmic segment spans residues 304-362 (FGKNFRKHFLQLIKYIPPKMRTHASVNTKSSLVSSSLSDTKRASKKIALQMTDNEEHCK). A lipid anchor (S-palmitoyl cysteine) is attached at Cys-361.

Belongs to the G-protein coupled receptor 1 family. Post-translationally, C-terminal Ser or Thr residues may be phosphorylated. Expressed in lung, liver, kidney, and spleen, with highest expression in the heart.

The protein localises to the cell membrane. Its function is as follows. Receptor for angiotensin II, a vasoconstricting peptide, which acts as a key regulator of blood pressure and sodium retention by the kidney. The activated receptor in turn couples to G-alpha proteins G(q) (GNAQ, GNA11, GNA14 or GNA15) and thus activates phospholipase C and increases the cytosolic Ca(2+) concentrations, which in turn triggers cellular responses such as stimulation of protein kinase C. This is Type-1 angiotensin II receptor A (agtr1-a) from Xenopus laevis (African clawed frog).